The sequence spans 342 residues: NAD kinase (342 aa).

Asp-66 acts as the Proton acceptor in catalysis. Residues Asp-66–Gly-67, Arg-71, Asn-141–Asp-142, Lys-152, Asp-171, Thr-182–Ser-187, and Ala-206 contribute to the NAD(+) site.

It belongs to the NAD kinase family. A divalent metal cation serves as cofactor.

The protein resides in the cytoplasm. It catalyses the reaction NAD(+) + ATP = ADP + NADP(+) + H(+). Functionally, involved in the regulation of the intracellular balance of NAD and NADP, and is a key enzyme in the biosynthesis of NADP. Catalyzes specifically the phosphorylation on 2'-hydroxyl of the adenosine moiety of NAD to yield NADP. The chain is NAD kinase from Bifidobacterium longum (strain NCC 2705).